A 149-amino-acid polypeptide reads, in one-letter code: UPF0178 protein NT01CX_0440 (149 aa).

It belongs to the UPF0178 family.

The protein is UPF0178 protein NT01CX_0440 of Clostridium novyi (strain NT).